Here is an 89-residue protein sequence, read N- to C-terminus: Small ribosomal subunit protein uS15 (89 aa).

Belongs to the universal ribosomal protein uS15 family. Part of the 30S ribosomal subunit. Forms a bridge to the 50S subunit in the 70S ribosome, contacting the 23S rRNA.

One of the primary rRNA binding proteins, it binds directly to 16S rRNA where it helps nucleate assembly of the platform of the 30S subunit by binding and bridging several RNA helices of the 16S rRNA. Its function is as follows. Forms an intersubunit bridge (bridge B4) with the 23S rRNA of the 50S subunit in the ribosome. This chain is Small ribosomal subunit protein uS15, found in Chlorobium phaeobacteroides (strain BS1).